The chain runs to 91 residues: Large ribosomal subunit protein bL27 (91 aa).

A disordered region spans residues M1–F26.

Belongs to the bacterial ribosomal protein bL27 family.

This is Large ribosomal subunit protein bL27 from Chloroflexus aurantiacus (strain ATCC 29366 / DSM 635 / J-10-fl).